A 529-amino-acid polypeptide reads, in one-letter code: Bifunctional purine biosynthesis protein PurH (529 aa).

In terms of domain architecture, MGS-like spans 1–146 (MAPTALLSVS…KNHAHVAVLT (146 aa)).

This sequence belongs to the PurH family.

It carries out the reaction (6R)-10-formyltetrahydrofolate + 5-amino-1-(5-phospho-beta-D-ribosyl)imidazole-4-carboxamide = 5-formamido-1-(5-phospho-D-ribosyl)imidazole-4-carboxamide + (6S)-5,6,7,8-tetrahydrofolate. The enzyme catalyses IMP + H2O = 5-formamido-1-(5-phospho-D-ribosyl)imidazole-4-carboxamide. Its pathway is purine metabolism; IMP biosynthesis via de novo pathway; 5-formamido-1-(5-phospho-D-ribosyl)imidazole-4-carboxamide from 5-amino-1-(5-phospho-D-ribosyl)imidazole-4-carboxamide (10-formyl THF route): step 1/1. The protein operates within purine metabolism; IMP biosynthesis via de novo pathway; IMP from 5-formamido-1-(5-phospho-D-ribosyl)imidazole-4-carboxamide: step 1/1. This chain is Bifunctional purine biosynthesis protein PurH, found in Synechococcus sp. (strain CC9311).